We begin with the raw amino-acid sequence, 369 residues long: Phosphoribosyl pyrophosphate synthase-associated protein 2 (369 aa).

M1 carries the N-acetylmethionine modification. Phosphoserine occurs at positions 219, 227, and 233.

Belongs to the ribose-phosphate pyrophosphokinase family. Binds to PRPS1 and PRPS2.

Seems to play a negative regulatory role in 5-phosphoribose 1-diphosphate synthesis. The chain is Phosphoribosyl pyrophosphate synthase-associated protein 2 (PRPSAP2) from Bos taurus (Bovine).